A 335-amino-acid polypeptide reads, in one-letter code: Geranylgeranyl pyrophosphate synthase BTS1 (335 aa).

Residues K36, R39, and H68 each coordinate isopentenyl diphosphate. The Mg(2+) site is built by D75 and D79. R84 contacts dimethylallyl diphosphate. An isopentenyl diphosphate-binding site is contributed by R85. Dimethylallyl diphosphate contacts are provided by K169, T170, Q206, N213, K223, and K233.

The protein belongs to the FPP/GGPP synthase family. The cofactor is Mg(2+).

Its subcellular location is the cytoplasm. The enzyme catalyses isopentenyl diphosphate + dimethylallyl diphosphate = (2E)-geranyl diphosphate + diphosphate. It catalyses the reaction isopentenyl diphosphate + (2E)-geranyl diphosphate = (2E,6E)-farnesyl diphosphate + diphosphate. The catalysed reaction is isopentenyl diphosphate + (2E,6E)-farnesyl diphosphate = (2E,6E,10E)-geranylgeranyl diphosphate + diphosphate. The protein operates within isoprenoid biosynthesis; farnesyl diphosphate biosynthesis; farnesyl diphosphate from geranyl diphosphate and isopentenyl diphosphate: step 1/1. Its pathway is isoprenoid biosynthesis; geranyl diphosphate biosynthesis; geranyl diphosphate from dimethylallyl diphosphate and isopentenyl diphosphate: step 1/1. It functions in the pathway isoprenoid biosynthesis; geranylgeranyl diphosphate biosynthesis; geranylgeranyl diphosphate from farnesyl diphosphate and isopentenyl diphosphate: step 1/1. Functionally, catalyzes the trans-addition of the 3 molecules of IPP onto DMAPP to form geranylgeranyl pyrophosphate. Required for the membrane attachment of YPT1 and SEC4. May be involved in vesicle trafficking and protein sorting. In Saccharomyces cerevisiae (strain ATCC 204508 / S288c) (Baker's yeast), this protein is Geranylgeranyl pyrophosphate synthase BTS1 (BTS1).